The following is a 160-amino-acid chain: SsrA-binding protein (160 aa).

The disordered stretch occupies residues 133–160 (KKLHDKRETEKERDWNRQKSRLLKGNSQ). Positions 137 to 149 (DKRETEKERDWNR) are enriched in basic and acidic residues.

This sequence belongs to the SmpB family.

It is found in the cytoplasm. In terms of biological role, required for rescue of stalled ribosomes mediated by trans-translation. Binds to transfer-messenger RNA (tmRNA), required for stable association of tmRNA with ribosomes. tmRNA and SmpB together mimic tRNA shape, replacing the anticodon stem-loop with SmpB. tmRNA is encoded by the ssrA gene; the 2 termini fold to resemble tRNA(Ala) and it encodes a 'tag peptide', a short internal open reading frame. During trans-translation Ala-aminoacylated tmRNA acts like a tRNA, entering the A-site of stalled ribosomes, displacing the stalled mRNA. The ribosome then switches to translate the ORF on the tmRNA; the nascent peptide is terminated with the 'tag peptide' encoded by the tmRNA and targeted for degradation. The ribosome is freed to recommence translation, which seems to be the essential function of trans-translation. In Agrobacterium fabrum (strain C58 / ATCC 33970) (Agrobacterium tumefaciens (strain C58)), this protein is SsrA-binding protein.